We begin with the raw amino-acid sequence, 23 residues long: Ascaphin-1 (23 aa).

Position 23 is an asparagine amide (Asn23).

In terms of tissue distribution, expressed by the skin glands.

The protein resides in the secreted. Antimicrobial peptide that shows higher potency against Gram-negative bacteria than against Gram-positive bacteria. Has a very week hemolytic activity. This Ascaphus truei (Coastal tailed frog) protein is Ascaphin-1.